Reading from the N-terminus, the 143-residue chain is Ribosome-binding factor A (143 aa).

The tract at residues 123–143 is disordered; the sequence is VRAQAAQAKPAGEANPYKERN. A compositionally biased stretch (low complexity) spans 124 to 136; that stretch reads RAQAAQAKPAGEA.

It belongs to the RbfA family. In terms of assembly, monomer. Binds 30S ribosomal subunits, but not 50S ribosomal subunits or 70S ribosomes.

It localises to the cytoplasm. One of several proteins that assist in the late maturation steps of the functional core of the 30S ribosomal subunit. Associates with free 30S ribosomal subunits (but not with 30S subunits that are part of 70S ribosomes or polysomes). Required for efficient processing of 16S rRNA. May interact with the 5'-terminal helix region of 16S rRNA. The chain is Ribosome-binding factor A from Corynebacterium urealyticum (strain ATCC 43042 / DSM 7109).